The sequence spans 971 residues: uncharacterized protein (971 aa).

A run of 13 helical transmembrane segments spans residues 11–31 (WLLK…GIIF), 516–536 (FASS…ALGI), 547–567 (LALA…GGVV), 569–589 (VFSF…LITL), 615–635 (FFTM…VIYL), 651–671 (AITS…LFVS), 727–747 (LLFI…LYLG), 763–783 (STGI…YSLP), 795–815 (IALI…NFIF), 817–837 (IDQS…FFQA), 878–898 (IGSS…FGGI), 900–920 (GTIN…SVFV), and 923–943 (LPLF…YVQI).

The protein resides in the cell membrane. This is an uncharacterized protein from Mycoplasma pneumoniae (strain ATCC 29342 / M129 / Subtype 1) (Mycoplasmoides pneumoniae).